The following is a 425-amino-acid chain: Glutamate-1-semialdehyde 2,1-aminomutase (425 aa).

Lys264 is modified (N6-(pyridoxal phosphate)lysine).

The protein belongs to the class-III pyridoxal-phosphate-dependent aminotransferase family. HemL subfamily. In terms of assembly, homodimer. Pyridoxal 5'-phosphate serves as cofactor.

The protein resides in the cytoplasm. The catalysed reaction is (S)-4-amino-5-oxopentanoate = 5-aminolevulinate. It participates in porphyrin-containing compound metabolism; protoporphyrin-IX biosynthesis; 5-aminolevulinate from L-glutamyl-tRNA(Glu): step 2/2. The chain is Glutamate-1-semialdehyde 2,1-aminomutase from Leptospira biflexa serovar Patoc (strain Patoc 1 / Ames).